Reading from the N-terminus, the 457-residue chain is Transcription factor E2F3 (457 aa).

Residues 80–171 (LLPSVPGTEP…PKSPSEKTRY (92 aa)) form a disordered region. The span at 93-102 (SLYTTPQGPS) shows a compositional bias: polar residues. The interval 96–145 (TTPQGPSSRVGLLQQPPAPGRGGGGGPPAKRRLELGESGHQYLSDGLKTP) is cyclin A/CDK2 binding. Residues 147-237 (GKGRAALRSP…KNNVQWMGCS (91 aa)) mediate DNA binding. Residues 155 to 164 (SPDSPKTPKS) are compositionally biased toward low complexity. Positions 196–217 (LNKAAEVLKVQKRRIYDITNVL) are leucine-zipper. Positions 201-237 (EVLKVQKRRIYDITNVLEGIHLIKKKSKNNVQWMGCS) match the DEF box motif. Residues 238–329 (LSEDGGMLAQ…VPDSIESLQI (92 aa)) are dimerization. The tract at residues 350-387 (HRPMKTNNQDHNGNIPKPTSKDLASNNSGHSDCSVSTA) is disordered. Polar residues predominate over residues 371-387 (DLASNNSGHSDCSVSTA). A transactivation region spans residues 383–457 (SVSTANLSPL…LPLVEDFMCS (75 aa)). Residues 424 to 441 (EDYLLSLGEEEGISDLFD) are retinoblastoma protein binding.

This sequence belongs to the E2F/DP family. Component of the DRTF1/E2F transcription factor complex. Binds cooperatively with TFDP1/Dp-1 to E2F sites. Interacts with retinoblastoma protein RB1 and related proteins (such as RBL1) that inhibit the E2F transactivation domain. Binds EAPP.

The protein localises to the nucleus. Transcription activator that binds DNA cooperatively with DP proteins through the E2 recognition site, 5'-TTTC[CG]CGC-3' found in the promoter region of a number of genes whose products are involved in cell cycle regulation or in DNA replication. The DRTF1/E2F complex functions in the control of cell-cycle progression from G1 to S phase. E2F3 binds specifically to RB1 in a cell-cycle dependent manner. Inhibits adipogenesis, probably through the repression of CEBPA binding to its target gene promoters. The protein is Transcription factor E2F3 (E2f3) of Mus musculus (Mouse).